Reading from the N-terminus, the 602-residue chain is Threonine--tRNA ligase (602 aa).

Residues 208-499 form a catalytic region; the sequence is DHRKLGTELK…LTEHCAGEFP (292 aa). Positions 300, 351, and 476 each coordinate Zn(2+).

The protein belongs to the class-II aminoacyl-tRNA synthetase family. Homodimer. Zn(2+) serves as cofactor.

It localises to the cytoplasm. It catalyses the reaction tRNA(Thr) + L-threonine + ATP = L-threonyl-tRNA(Thr) + AMP + diphosphate + H(+). In terms of biological role, catalyzes the attachment of threonine to tRNA(Thr) in a two-step reaction: L-threonine is first activated by ATP to form Thr-AMP and then transferred to the acceptor end of tRNA(Thr). Also edits incorrectly charged L-seryl-tRNA(Thr). This is Threonine--tRNA ligase from Campylobacter jejuni subsp. jejuni serotype O:23/36 (strain 81-176).